Here is a 405-residue protein sequence, read N- to C-terminus: S-adenosylmethionine synthase (405 aa).

H22 lines the ATP pocket. D24 is a Mg(2+) binding site. E50 provides a ligand contact to K(+). 2 residues coordinate L-methionine: E63 and Q107. Residues 107–117 (QSPDIAQGVDR) are flexible loop. Residues 184–186 (DGK), 250–251 (RF), D259, 265–266 (RK), A282, and K286 contribute to the ATP site. D259 serves as a coordination point for L-methionine. Position 290 (K290) interacts with L-methionine.

The protein belongs to the AdoMet synthase family. Homotetramer; dimer of dimers. Mg(2+) is required as a cofactor. It depends on K(+) as a cofactor.

It is found in the cytoplasm. The catalysed reaction is L-methionine + ATP + H2O = S-adenosyl-L-methionine + phosphate + diphosphate. The protein operates within amino-acid biosynthesis; S-adenosyl-L-methionine biosynthesis; S-adenosyl-L-methionine from L-methionine: step 1/1. Functionally, catalyzes the formation of S-adenosylmethionine (AdoMet) from methionine and ATP. The overall synthetic reaction is composed of two sequential steps, AdoMet formation and the subsequent tripolyphosphate hydrolysis which occurs prior to release of AdoMet from the enzyme. The polypeptide is S-adenosylmethionine synthase (Roseiflexus sp. (strain RS-1)).